We begin with the raw amino-acid sequence, 716 residues long: ATP-dependent zinc metalloprotease FTSH 1, chloroplastic (716 aa).

The N-terminal 48 residues, 1-48 (MASNSLLRSSSNFFLGSHIIISSPTPKTTRKPSFPFSFVSRAKYQITR), are a transit peptide targeting the chloroplast. The N-terminal 38 residues, 49–86 (SSQDENSPNGKPNSPFSSQVALAAILLSSISSSPLALA), are a transit peptide targeting the thylakoid. The helical transmembrane segment at 204–224 (FTVIGNLIFPLLAFGGLFLLF) threads the bilayer. Residue 302–309 (GPPGTGKT) participates in ATP binding. Histidine 524 contacts Zn(2+). Glutamate 525 is an active-site residue. 2 residues coordinate Zn(2+): histidine 528 and aspartate 605.

In the N-terminal section; belongs to the AAA ATPase family. This sequence in the C-terminal section; belongs to the peptidase M41 family. In terms of assembly, interacts with CHIP and HSP70. Heterohexamers with FTSH2, FTSH5 and FTSH8. Zn(2+) serves as cofactor. The FTSH1 precursor is ubiquitinated by CHIP in the cytoplasm. Ubiquitous.

It localises to the plastid. It is found in the chloroplast thylakoid membrane. Part of a complex that function as an ATP-dependent zinc metallopeptidase. Involved in the thylakoid formation and in the removal of damaged D1 in the photosystem II, preventing cell death under high-intensity light conditions. The chain is ATP-dependent zinc metalloprotease FTSH 1, chloroplastic (FTSH1) from Arabidopsis thaliana (Mouse-ear cress).